A 327-amino-acid polypeptide reads, in one-letter code: Lipid phosphate phosphatase 1 (327 aa).

The next 6 helical transmembrane spans lie at Trp51 to Tyr71, Ile93 to Leu113, Val118 to Ile138, Phe187 to Ser207, Gly217 to Ile237, and Trp244 to Cys264.

This sequence belongs to the PA-phosphatase related phosphoesterase family. Strongly expressed in leaves, moderately in roots, weakly in floral hamps and flower buds, and not detected in adult flowers and seedpods.

The protein localises to the membrane. With respect to regulation, PA phosphatase activity inhibited by N-ethylmaleimide with an IC(50) value of 10 mM. Functionally, plays a general role in cellular responses to stress, may be by attenuating the signal produced by phospholipases. Exhibits both diacylglycerol pyrophosphate (DGPP) phosphatase and phosphatidate (PA) phosphatase activities. Substrate preference is diacylglycerol pyrophosphate &gt; phosphatidate. This chain is Lipid phosphate phosphatase 1 (LPP1), found in Arabidopsis thaliana (Mouse-ear cress).